The sequence spans 56 residues: Photosystem II reaction center protein K (56 aa).

Residues 1 to 19 (MLNFLLQNTFVLWSNFILC) constitute a propeptide that is removed on maturation. Residues 35–55 (MPVIPVFFFLLAFVWQAAVSF) traverse the membrane as a helical segment.

The protein belongs to the PsbK family. As to quaternary structure, PSII is composed of 1 copy each of membrane proteins PsbA, PsbB, PsbC, PsbD, PsbE, PsbF, PsbH, PsbI, PsbJ, PsbK, PsbL, PsbM, PsbT, PsbX, PsbY, PsbZ, Psb30/Ycf12, at least 3 peripheral proteins of the oxygen-evolving complex and a large number of cofactors. It forms dimeric complexes.

It is found in the plastid. It localises to the chloroplast thylakoid membrane. One of the components of the core complex of photosystem II (PSII). PSII is a light-driven water:plastoquinone oxidoreductase that uses light energy to abstract electrons from H(2)O, generating O(2) and a proton gradient subsequently used for ATP formation. It consists of a core antenna complex that captures photons, and an electron transfer chain that converts photonic excitation into a charge separation. The polypeptide is Photosystem II reaction center protein K (Welwitschia mirabilis (Tree tumbo)).